The following is a 193-amino-acid chain: Imidazoleglycerol-phosphate dehydratase (193 aa).

Belongs to the imidazoleglycerol-phosphate dehydratase family.

It localises to the cytoplasm. The enzyme catalyses D-erythro-1-(imidazol-4-yl)glycerol 3-phosphate = 3-(imidazol-4-yl)-2-oxopropyl phosphate + H2O. It participates in amino-acid biosynthesis; L-histidine biosynthesis; L-histidine from 5-phospho-alpha-D-ribose 1-diphosphate: step 6/9. This is Imidazoleglycerol-phosphate dehydratase from Saccharolobus islandicus (strain Y.G.57.14 / Yellowstone #1) (Sulfolobus islandicus).